We begin with the raw amino-acid sequence, 242 residues long: Beta-carotene ketolase (242 aa).

It catalyses the reaction all-trans-beta-carotene + 2 AH2 + 2 O2 = echinenone + 2 A + 3 H2O. The catalysed reaction is echinenone + 2 AH2 + 2 O2 = canthaxanthin + 2 A + 3 H2O. Its pathway is carotenoid biosynthesis; astaxanthin biosynthesis. Functionally, converts beta-carotene to canthaxanthin via echinenone. The sequence is that of Beta-carotene ketolase (crtW) from Paracoccus sp. (strain N81106 / MBIC 01143) (Agrobacterium aurantiacum).